An 80-amino-acid chain; its full sequence is Cortexin-3 (80 aa).

Residues 28-48 (TTFVFVILLFIFLGILIVRCF) form a helical membrane-spanning segment.

This sequence belongs to the cortexin family.

It localises to the membrane. The polypeptide is Cortexin-3 (Ctxn3) (Mus musculus (Mouse)).